A 232-amino-acid chain; its full sequence is MRLKIGIIGAMAQEVEILRNLMVEAKVIEIAGCKIYDGKINNTQVALLQSGIGKVAAAVGTALLLELTKPDVIINTGSAGGLDANLNVGDIVISTEVRHHDADVTAFGYEKGQLPANPAAFLPNEQLVSVALKETQTAGFNAVSGLICSGDVFVNGAEKIAQIRQDFPNVAAVEMEAAAIAQVCHAFNVPFVVVRAISDVADKESHLSFDEFLPLAAKNSSEIVVAMLNNFA.

Glu-14 functions as the Proton acceptor in the catalytic mechanism. Residues Gly-80, Val-154, and 175–176 (ME) each bind substrate. Asp-199 functions as the Proton donor in the catalytic mechanism.

It belongs to the PNP/UDP phosphorylase family. MtnN subfamily.

It carries out the reaction S-adenosyl-L-homocysteine + H2O = S-(5-deoxy-D-ribos-5-yl)-L-homocysteine + adenine. The catalysed reaction is S-methyl-5'-thioadenosine + H2O = 5-(methylsulfanyl)-D-ribose + adenine. It catalyses the reaction 5'-deoxyadenosine + H2O = 5-deoxy-D-ribose + adenine. Its pathway is amino-acid biosynthesis; L-methionine biosynthesis via salvage pathway; S-methyl-5-thio-alpha-D-ribose 1-phosphate from S-methyl-5'-thioadenosine (hydrolase route): step 1/2. In terms of biological role, catalyzes the irreversible cleavage of the glycosidic bond in both 5'-methylthioadenosine (MTA) and S-adenosylhomocysteine (SAH/AdoHcy) to adenine and the corresponding thioribose, 5'-methylthioribose and S-ribosylhomocysteine, respectively. Also cleaves 5'-deoxyadenosine, a toxic by-product of radical S-adenosylmethionine (SAM) enzymes, into 5-deoxyribose and adenine. The sequence is that of 5'-methylthioadenosine/S-adenosylhomocysteine nucleosidase from Actinobacillus pleuropneumoniae serotype 5b (strain L20).